The primary structure comprises 171 residues: MALLTVLCYPDSRLHKVAKPVAQVDARIKKIVADMADTMYEAPGVGLAATQVDIHERIVVIDVSDEQNELMVFINPEIVWTSSETKSWREGCLSVPEFYDEVERPAEIRVKALDIDGKEFEIEADGSLAVCLQHELDHLQGKVFVEYLSIFKRTRISQKMKKRAKELIGQR.

Residues Cys-92 and His-134 each contribute to the Fe cation site. Glu-135 is an active-site residue. Residue His-138 coordinates Fe cation.

Belongs to the polypeptide deformylase family. Requires Fe(2+) as cofactor.

The enzyme catalyses N-terminal N-formyl-L-methionyl-[peptide] + H2O = N-terminal L-methionyl-[peptide] + formate. Removes the formyl group from the N-terminal Met of newly synthesized proteins. Requires at least a dipeptide for an efficient rate of reaction. N-terminal L-methionine is a prerequisite for activity but the enzyme has broad specificity at other positions. This chain is Peptide deformylase, found in Polynucleobacter necessarius subsp. necessarius (strain STIR1).